The following is a 77-amino-acid chain: UPF0401 protein c0279 (77 aa).

The protein belongs to the UPF0401 family.

The protein is UPF0401 protein c0279 of Escherichia coli O6:H1 (strain CFT073 / ATCC 700928 / UPEC).